We begin with the raw amino-acid sequence, 578 residues long: Arginine--tRNA ligase (578 aa).

A 'HIGH' region motif is present at residues 125-135; that stretch reads PNVAKKMHVGH.

It belongs to the class-I aminoacyl-tRNA synthetase family. As to quaternary structure, monomer.

It is found in the cytoplasm. It carries out the reaction tRNA(Arg) + L-arginine + ATP = L-arginyl-tRNA(Arg) + AMP + diphosphate. In Buchnera aphidicola subsp. Baizongia pistaciae (strain Bp), this protein is Arginine--tRNA ligase.